The chain runs to 637 residues: SCF-associated factor 1 (637 aa).

The F-box domain occupies 14–63; it reads GLSPDIVQATLPFLSSDDIKNLSQTNKYYNTLLDFDHSKILWHELFHKAF. Residue serine 16 is modified to Phosphoserine. The RCC1 1 repeat unit spans residues 109–202; sequence AKFYSWGYLK…GFSFQILTES (94 aa). The interval 242-315 is disordered; sequence YPRITSRSNG…RTTMPSMGPH (74 aa). The span at 244 to 260 shows a compositional bias: polar residues; that stretch reads RITSRSNGSTVNTTGTF. Serine 266 bears the Phosphoserine mark. Low complexity predominate over residues 289–305; it reads SGGAPAASPGGSHSGVP. An RCC1 2 repeat occupies 565–635; it reads GHLYSWGIES…GWQTGALIIK (71 aa).

Interacts with AAH1, SKP1 and CDC53. Component of the SCF(SAF1) complex containing CDC53, SKP1, HRT1 and SAF1.

It functions in the pathway protein modification; protein ubiquitination. Substrate recognition component of a SCF (SKP1-CUL1-F-box protein) E3 ubiquitin-protein ligase complex which mediates the ubiquitination and subsequent proteasomal degradation of target proteins. Targets AAH1 adenine deaminase for proteasome-dependent degradation upon entry into quiescence. Targets also URA7. The sequence is that of SCF-associated factor 1 (SAF1) from Saccharomyces cerevisiae (strain ATCC 204508 / S288c) (Baker's yeast).